Here is a 552-residue protein sequence, read N- to C-terminus: Cation transporter HKT1;1 (552 aa).

Residues 1–70 (MHPPSLVLDT…QSYSFLVCKS (70 aa)) are Cytoplasmic-facing. 2 helical membrane passes run 71 to 91 (NPLV…FLAL) and 133 to 153 (LWVL…MLGL). At 154 to 221 (YFNNANANRN…TYNPCAVLVR (68 aa)) the chain is on the cytoplasmic side. A run of 2 helical transmembrane segments spans residues 222-242 (IVTG…IIYF) and 291-311 (VLLL…SPLL). At 312–348 (RLCVWVLGKVSGKAEYAYILQHPGETGYKHLHVRRNS) the chain is on the cytoplasmic side. 2 helical membrane-spanning segments follow: residues 349-369 (VYIV…ICSF) and 402-422 (ILDI…VMYL). The Cytoplasmic segment spans residues 423–448 (PSDASFLTANADNQPLTDKKTNSISR). A run of 2 helical transmembrane segments spans residues 449-471 (ALWR…LACI) and 524-544 (GFVG…MFLG). At 545–552 (RLKEFILK) the chain is on the cytoplasmic side.

It belongs to the TrkH potassium transport family. HKT (TC 2.A.38.3) subfamily. Expressed in shoots. In roots, expressed in epidermis, exodermis, cortex, and sieve elements and companion cells of phloem. In mature leaves, expressed in large highly vacuolated cells of the adaxial epidermis, phloem and xylem.

The protein resides in the membrane. It catalyses the reaction Na(+)(in) = Na(+)(out). Functions as a low-affinity sodium transporter. This chain is Cation transporter HKT1;1, found in Oryza sativa subsp. japonica (Rice).